We begin with the raw amino-acid sequence, 388 residues long: S-adenosylmethionine synthase (388 aa).

An ATP-binding site is contributed by histidine 16. Aspartate 18 lines the Mg(2+) pocket. Position 44 (glutamate 44) interacts with K(+). The L-methionine site is built by glutamate 57 and glutamine 100. A flexible loop region spans residues 100–110 (QSADIAQGVNE). ATP contacts are provided by residues 167-169 (DAK), 233-234 (RF), aspartate 242, 248-249 (RK), alanine 265, and lysine 269. Residue aspartate 242 coordinates L-methionine. Lysine 273 is a binding site for L-methionine.

This sequence belongs to the AdoMet synthase family. As to quaternary structure, homotetramer; dimer of dimers. Mg(2+) serves as cofactor. It depends on K(+) as a cofactor.

It is found in the cytoplasm. It catalyses the reaction L-methionine + ATP + H2O = S-adenosyl-L-methionine + phosphate + diphosphate. Its pathway is amino-acid biosynthesis; S-adenosyl-L-methionine biosynthesis; S-adenosyl-L-methionine from L-methionine: step 1/1. Catalyzes the formation of S-adenosylmethionine (AdoMet) from methionine and ATP. The overall synthetic reaction is composed of two sequential steps, AdoMet formation and the subsequent tripolyphosphate hydrolysis which occurs prior to release of AdoMet from the enzyme. In Aromatoleum aromaticum (strain DSM 19018 / LMG 30748 / EbN1) (Azoarcus sp. (strain EbN1)), this protein is S-adenosylmethionine synthase.